A 170-amino-acid chain; its full sequence is Small ribosomal subunit protein uS5 (170 aa).

Positions 11–74 (ILEKLVHINR…ETARRVLIHV (64 aa)) constitute an S5 DRBM domain.

The protein belongs to the universal ribosomal protein uS5 family. As to quaternary structure, part of the 30S ribosomal subunit. Contacts proteins S4 and S8.

Functionally, with S4 and S12 plays an important role in translational accuracy. Its function is as follows. Located at the back of the 30S subunit body where it stabilizes the conformation of the head with respect to the body. In Pelagibacter ubique (strain HTCC1062), this protein is Small ribosomal subunit protein uS5.